We begin with the raw amino-acid sequence, 314 residues long: ATP synthase gamma chain (314 aa).

This sequence belongs to the ATPase gamma chain family. F-type ATPases have 2 components, CF(1) - the catalytic core - and CF(0) - the membrane proton channel. CF(1) has five subunits: alpha(3), beta(3), gamma(1), delta(1), epsilon(1). CF(0) has three main subunits: a, b and c.

Its subcellular location is the cellular thylakoid membrane. Functionally, produces ATP from ADP in the presence of a proton gradient across the membrane. The gamma chain is believed to be important in regulating ATPase activity and the flow of protons through the CF(0) complex. In Synechococcus sp. (strain JA-3-3Ab) (Cyanobacteria bacterium Yellowstone A-Prime), this protein is ATP synthase gamma chain.